A 208-amino-acid chain; its full sequence is uncharacterized protein (208 aa).

6 helical membrane-spanning segments follow: residues 5–25 (VIGILVIIAIISVGFFQKEAW), 41–61 (MLLIAADVFFPIVPFALIAAL), 69–89 (ANGIWITLTGSMLGTILLFFL), 123–143 (VLLGRLIPVIPSLVMNVICGL), 150–170 (VFFFASLIGKIPNIVVVTIAG), and 176–196 (NKLLSISIYGTYILIIMLVIY).

The protein localises to the cell membrane. This is an uncharacterized protein from Bacillus subtilis (strain 168).